A 139-amino-acid chain; its full sequence is Holo-[acyl-carrier-protein] synthase (139 aa).

2 residues coordinate Mg(2+): Asp-9 and Glu-63.

Belongs to the P-Pant transferase superfamily. AcpS family. Mg(2+) serves as cofactor.

It localises to the cytoplasm. It carries out the reaction apo-[ACP] + CoA = holo-[ACP] + adenosine 3',5'-bisphosphate + H(+). Its function is as follows. Transfers the 4'-phosphopantetheine moiety from coenzyme A to a Ser of acyl-carrier-protein. This Wigglesworthia glossinidia brevipalpis protein is Holo-[acyl-carrier-protein] synthase.